A 500-amino-acid chain; its full sequence is NF-kappa-B inhibitor epsilon (500 aa).

The segment covering 1–10 (MNQRRSESRP) has biased composition (basic and acidic residues). Disordered regions lie at residues 1–66 (MNQR…PAWA), 84–215 (LSSL…YGSS), and 222–241 (SLLGGPEAEDPAPRLPLPHV). 3 positions are modified to phosphoserine: serine 157, serine 161, and serine 183. Low complexity predominate over residues 161 to 186 (SLRSLRSLPESTSAPASGPSDGSPQP). Residues 196 to 209 (EPQEKEDADGERAD) are compositionally biased toward basic and acidic residues. ANK repeat units follow at residues 258–291 (DGDTLVHLAVIHEAPAVLLCCLALLPQEVLDIQN), 293–322 (LYQTALHLAVHLDQPGAVRALVLKGASRAL), 326–355 (HGDTALHVACQRQHLACARCLLEGRPEPGR), 369–398 (QGLACLHIATLQKNQPLMELLLRNGADIDV), 403–432 (SGKTALHLAVETQERGLVQFLLQAGAQVDA), and 436–465 (NGCTPLHLAAGRGLMGISSTLCKAGADSLL).

It belongs to the NF-kappa-B inhibitor family. As to quaternary structure, interacts with RELA, REL, NFKB1 nuclear factor NF-kappa-B p50 subunit and NFKB2 nuclear factor NF-kappa-B p52 subunit. Interacts with HNRNPA2B1; the interaction may be mediated by the RRM2 domain of HNRNPA2B1, and HNRNPA2B1 may interact simultaneously with FAM76B and either NFKBIA or NFKBIE to form a complex. Serine phosphorylated; followed by proteasome-dependent degradation. In terms of tissue distribution, highly expressed in spleen, testis and lung, followed by kidney, pancreas, heart, placenta and brain. Also expressed in granulocytes and macrophages.

It localises to the cytoplasm. Its function is as follows. Sequesters NF-kappa-B transcription factor complexes in the cytoplasm, thereby inhibiting their activity. Sequestered complexes include NFKB1-RELA (p50-p65) and NFKB1-REL (p50-c-Rel) complexes. Limits B-cell activation in response to pathogens, and also plays an important role in B-cell development. The chain is NF-kappa-B inhibitor epsilon (NFKBIE) from Homo sapiens (Human).